Reading from the N-terminus, the 393-residue chain is MDLVEKLKNDVREIEDWIIQIRRKIHEYPELSYKEYNTSKLVAETLRKLGVEVEEGVGLPTAVVGKIRGSKPGKTVALRADMDALPVEENTDLEFKSKVKGVMHACGHDTHVAMLLGGAYLLVKNKDLISGEIRLIFQPAEEDGGLGGAKPMIEAGVMNGVDYVFGIHISSSYPSGVFATRKGPIMATPDAFKIIVHGKGGHGSAPHETIDPIFISLQIANAIYGITARQIDPVQPFIISITTIHSGTKDNIIPDDAEMQGTIRSLDENVRSKAKDYMRRIVSSICGIYGATCEVKFMEDVYPTTVNNPEVTDEVMKILSSISTVVETEPVLGAEDFSRFLQKAPGTYFFLGTRNEKKGCIYPNHSSKFCVDEDVLKLGALAHALLAVKFSNK.

H104, D109, and H245 together coordinate Zn(2+). The Proton donor role is filled by Y302. E373 acts as the Nucleophile in catalysis.

The protein belongs to the peptidase M20 family. In terms of assembly, homotetramer. Zn(2+) is required as a cofactor.

Its function is as follows. Can release basic, acidic, aromatic, and, to a lesser extent, aliphatic amino acids. This chain is Thermostable carboxypeptidase 1 (cpsA1), found in Saccharolobus solfataricus (strain ATCC 35092 / DSM 1617 / JCM 11322 / P2) (Sulfolobus solfataricus).